A 270-amino-acid polypeptide reads, in one-letter code: Phosphonoacetaldehyde hydrolase (270 aa).

The active-site Nucleophile is the Asp-11. Asp-11 and Ala-13 together coordinate Mg(2+). Lys-53 (schiff-base intermediate with substrate) is an active-site residue. Asp-187 serves as a coordination point for Mg(2+).

The protein belongs to the HAD-like hydrolase superfamily. PhnX family. As to quaternary structure, homodimer. Mg(2+) serves as cofactor.

The enzyme catalyses phosphonoacetaldehyde + H2O = acetaldehyde + phosphate + H(+). In terms of biological role, involved in phosphonate degradation. In Salmonella paratyphi C (strain RKS4594), this protein is Phosphonoacetaldehyde hydrolase.